Consider the following 433-residue polypeptide: Signal recognition particle 54 kDa protein (433 aa).

GTP-binding positions include 106–113 (GVEGSGKT), 186–190 (DTAGR), and 244–247 (TKMD).

This sequence belongs to the GTP-binding SRP family. SRP54 subfamily. In terms of assembly, part of the signal recognition particle protein translocation system, which is composed of SRP and FtsY. Archaeal SRP consists of a 7S RNA molecule of 300 nucleotides and two protein subunits: SRP54 and SRP19.

The protein localises to the cytoplasm. The catalysed reaction is GTP + H2O = GDP + phosphate + H(+). Functionally, involved in targeting and insertion of nascent membrane proteins into the cytoplasmic membrane. Binds to the hydrophobic signal sequence of the ribosome-nascent chain (RNC) as it emerges from the ribosomes. The SRP-RNC complex is then targeted to the cytoplasmic membrane where it interacts with the SRP receptor FtsY. In Pyrobaculum islandicum (strain DSM 4184 / JCM 9189 / GEO3), this protein is Signal recognition particle 54 kDa protein.